The chain runs to 273 residues: NADPH-dependent 7-cyano-7-deazaguanine reductase (273 aa).

81-83 (VES) contributes to the substrate binding site. 83–84 (SK) provides a ligand contact to NADPH. The Thioimide intermediate role is filled by Cys179. The active-site Proton donor is Asp186. 218–219 (AE) lines the substrate pocket. An NADPH-binding site is contributed by 247–248 (RG).

This sequence belongs to the GTP cyclohydrolase I family. QueF type 2 subfamily. In terms of assembly, homodimer.

Its subcellular location is the cytoplasm. The enzyme catalyses 7-aminomethyl-7-carbaguanine + 2 NADP(+) = 7-cyano-7-deazaguanine + 2 NADPH + 3 H(+). It participates in tRNA modification; tRNA-queuosine biosynthesis. Its function is as follows. Catalyzes the NADPH-dependent reduction of 7-cyano-7-deazaguanine (preQ0) to 7-aminomethyl-7-deazaguanine (preQ1). The chain is NADPH-dependent 7-cyano-7-deazaguanine reductase from Rickettsia akari (strain Hartford).